The sequence spans 639 residues: Serine/threonine-protein phosphatase 2B catalytic subunit A1 (639 aa).

The Fe cation site is built by Asp-120, His-122, and Asp-148. Zn(2+)-binding residues include Asp-148 and Asn-180. His-181 serves as the catalytic Proton donor. Residues His-229 and His-311 each contribute to the Zn(2+) site. Positions 494–503 (KSDIENERLP) are enriched in basic and acidic residues. Positions 494–602 (KSDIENERLP…PSTRRRSLEN (109 aa)) are disordered. Low complexity-rich tracts occupy residues 515–527 (ASPS…PATP) and 546–572 (TPIS…GGPP).

This sequence belongs to the PPP phosphatase family. PP-2B subfamily. As to quaternary structure, composed of two components (A and B), the A component is the catalytic subunit and the B component confers calcium sensitivity. It depends on Fe(3+) as a cofactor. The cofactor is Zn(2+).

The enzyme catalyses O-phospho-L-seryl-[protein] + H2O = L-seryl-[protein] + phosphate. The catalysed reaction is O-phospho-L-threonyl-[protein] + H2O = L-threonyl-[protein] + phosphate. Calcium-dependent, calmodulin-stimulated protein phosphatase. This subunit may have a role in the calmodulin activation of calcineurin. The polypeptide is Serine/threonine-protein phosphatase 2B catalytic subunit A1 (CNA1) (Cryptococcus neoformans var. grubii serotype A (strain H99 / ATCC 208821 / CBS 10515 / FGSC 9487) (Filobasidiella neoformans var. grubii)).